Reading from the N-terminus, the 417-residue chain is UPF0761 membrane protein CV_0810 (417 aa).

Helical transmembrane passes span 52-72, 79-99, 110-130, 150-170, 185-205, 214-234, and 258-278; these read LLAL…FPVF, FKIM…ITVY, LTAA…STIE, MVYW…LLSW, LLAS…VLAL, FVPF…LELT, and IPIF…GAVF.

This sequence belongs to the UPF0761 family.

It localises to the cell inner membrane. This Chromobacterium violaceum (strain ATCC 12472 / DSM 30191 / JCM 1249 / CCUG 213 / NBRC 12614 / NCIMB 9131 / NCTC 9757 / MK) protein is UPF0761 membrane protein CV_0810.